The following is a 178-amino-acid chain: 2-C-methyl-D-erythritol 2,4-cyclodiphosphate synthase (178 aa).

Positions 24, 26, and 61 each coordinate a divalent metal cation. 24-26 provides a ligand contact to 4-CDP-2-C-methyl-D-erythritol 2-phosphate; sequence DSH. 150–153 provides a ligand contact to 4-CDP-2-C-methyl-D-erythritol 2-phosphate; sequence TSGE.

Belongs to the IspF family. Homotrimer. The cofactor is a divalent metal cation.

The enzyme catalyses 4-CDP-2-C-methyl-D-erythritol 2-phosphate = 2-C-methyl-D-erythritol 2,4-cyclic diphosphate + CMP. It functions in the pathway isoprenoid biosynthesis; isopentenyl diphosphate biosynthesis via DXP pathway; isopentenyl diphosphate from 1-deoxy-D-xylulose 5-phosphate: step 4/6. Functionally, involved in the biosynthesis of isopentenyl diphosphate (IPP) and dimethylallyl diphosphate (DMAPP), two major building blocks of isoprenoid compounds. Catalyzes the conversion of 4-diphosphocytidyl-2-C-methyl-D-erythritol 2-phosphate (CDP-ME2P) to 2-C-methyl-D-erythritol 2,4-cyclodiphosphate (ME-CPP) with a corresponding release of cytidine 5-monophosphate (CMP). This is 2-C-methyl-D-erythritol 2,4-cyclodiphosphate synthase from Chlamydia trachomatis serovar L2 (strain ATCC VR-902B / DSM 19102 / 434/Bu).